A 224-amino-acid polypeptide reads, in one-letter code: Ribonuclease HII (224 aa).

One can recognise an RNase H type-2 domain in the interval 36 to 224 (RGVAGVDEVG…RRSFLRRFLG (189 aa)). The a divalent metal cation site is built by Asp-42, Glu-43, and Asp-138.

This sequence belongs to the RNase HII family. It depends on Mn(2+) as a cofactor. Requires Mg(2+) as cofactor.

The protein resides in the cytoplasm. It catalyses the reaction Endonucleolytic cleavage to 5'-phosphomonoester.. In terms of biological role, endonuclease that specifically degrades the RNA of RNA-DNA hybrids. This Parasynechococcus marenigrum (strain WH8102) protein is Ribonuclease HII.